The sequence spans 851 residues: Molybdenum cofactor sulfurase (851 aa).

Lysine 249 bears the N6-(pyridoxal phosphate)lysine mark. The active site involves cysteine 413. The MOSC domain occupies 665 to 844 (QYLRKFVMPG…LMVGDIVTPS (180 aa)).

This sequence belongs to the class-V pyridoxal-phosphate-dependent aminotransferase family. MOCOS subfamily. Pyridoxal 5'-phosphate serves as cofactor.

It carries out the reaction Mo-molybdopterin + L-cysteine + AH2 = thio-Mo-molybdopterin + L-alanine + A + H2O. The protein operates within cofactor biosynthesis; molybdopterin biosynthesis. Its function is as follows. Sulfurates the molybdenum cofactor. Sulfation of molybdenum is essential for xanthine dehydrogenase (XDH) and aldehyde oxidase (ADO) enzymes in which molybdenum cofactor is liganded by 1 oxygen and 1 sulfur atom in active form. The protein is Molybdenum cofactor sulfurase of Neosartorya fischeri (strain ATCC 1020 / DSM 3700 / CBS 544.65 / FGSC A1164 / JCM 1740 / NRRL 181 / WB 181) (Aspergillus fischerianus).